A 581-amino-acid chain; its full sequence is Intermediate filament protein ifa-2 (581 aa).

2 disordered regions span residues M1 to N35 and S47 to R68. The segment at M1–E74 is head. The span at Y7–Y28 shows a compositional bias: polar residues. Residues E71–N424 form the IF rod domain. Residues I75 to L106 are coil 1A. Positions Q107 to M120 are linker 1. Residues Y121–L258 form a coil 1B region. The linker 12 stretch occupies residues Q259–N276. The segment at E277 to N424 is coil 2. A tail region spans residues G425 to T578. A disordered region spans residues R449 to V469. The LTD domain maps to S457–Q574.

This sequence belongs to the intermediate filament family. As to quaternary structure, forms some heteromeric filaments with ifb-1. Mainly expressed in regions of the hypodermis adjacent to muscle. Expressed in longitudinal stripes where the mechanosensory neurons interface with the hypodermis. Also expressed to the uterine seam and within the uterine-vulval cells.

The protein resides in the cell junction. The protein localises to the hemidesmosome. Its function is as follows. Cytoplasmic intermediate filaments provide mechanical strength to cells. Essential protein, involved in attachment structures in epidermal cells that connect muscles to the external cuticle. Probably acts by forming hypodermal hemidesmosome complexes that help mediate muscle-cuticle force transduction. Although expressed during embryogenesis, it is not required for embryonic development of muscle-cuticle linkages nor for the localization of other proteins to the hemidesmosomes in embryos. The chain is Intermediate filament protein ifa-2 from Caenorhabditis elegans.